A 62-amino-acid polypeptide reads, in one-letter code: Calmodulin regulator protein PCP4 (62 aa).

The interval 1 to 40 is disordered; sequence MSERQGAGTTNGKDKPSGENDGQKKVQEEFDIDMDAPETE. Basic and acidic residues predominate over residues 12–28; it reads GKDKPSGENDGQKKVQE. The interval 28-40 is acidic; binds calcium and is required for modulating the calcium-binding kinetics of calmodulin; it reads EEFDIDMDAPETE. Residues 39 to 62 form the IQ domain; that stretch reads TERAAVAIQSQFRKFQKKKAGSQS.

The protein belongs to the PCP4 family. Binds to both calcium-free and calcium-bound calmodulin. The affinity for the calcium-bound form is 50-fold greater.

Its function is as follows. Functions as a modulator of calcium-binding by calmodulin. Thereby, regulates calmodulin activity and the different processes it controls. For instance, may play a role in neuronal differentiation through activation of calmodulin-dependent kinase signaling pathways. The polypeptide is Calmodulin regulator protein PCP4 (Bos taurus (Bovine)).